The sequence spans 252 residues: 5'-nucleotidase SurE (252 aa).

Residues aspartate 8, aspartate 9, serine 39, and asparagine 95 each contribute to the a divalent metal cation site.

This sequence belongs to the SurE nucleotidase family. A divalent metal cation is required as a cofactor.

It is found in the cytoplasm. It catalyses the reaction a ribonucleoside 5'-phosphate + H2O = a ribonucleoside + phosphate. Nucleotidase that shows phosphatase activity on nucleoside 5'-monophosphates. This is 5'-nucleotidase SurE from Thermoanaerobacter sp. (strain X514).